The sequence spans 62 residues: UPF0434 protein Avi_4243 (62 aa).

Belongs to the UPF0434 family.

The polypeptide is UPF0434 protein Avi_4243 (Allorhizobium ampelinum (strain ATCC BAA-846 / DSM 112012 / S4) (Agrobacterium vitis (strain S4))).